The chain runs to 258 residues: Tryptophan synthase alpha chain (258 aa).

Active-site proton acceptor residues include E52 and D63.

Belongs to the TrpA family. In terms of assembly, tetramer of two alpha and two beta chains.

The catalysed reaction is (1S,2R)-1-C-(indol-3-yl)glycerol 3-phosphate + L-serine = D-glyceraldehyde 3-phosphate + L-tryptophan + H2O. The protein operates within amino-acid biosynthesis; L-tryptophan biosynthesis; L-tryptophan from chorismate: step 5/5. Its function is as follows. The alpha subunit is responsible for the aldol cleavage of indoleglycerol phosphate to indole and glyceraldehyde 3-phosphate. The polypeptide is Tryptophan synthase alpha chain (Streptococcus pneumoniae (strain ATCC 700669 / Spain 23F-1)).